The primary structure comprises 206 residues: Dephospho-CoA kinase (206 aa).

One can recognise a DPCK domain in the interval 4 to 200; it reads IVALTGGIGS…AHYLQLASQF (197 aa). 12-17 serves as a coordination point for ATP; the sequence is GSGKST.

It belongs to the CoaE family.

It localises to the cytoplasm. The enzyme catalyses 3'-dephospho-CoA + ATP = ADP + CoA + H(+). The protein operates within cofactor biosynthesis; coenzyme A biosynthesis; CoA from (R)-pantothenate: step 5/5. Its function is as follows. Catalyzes the phosphorylation of the 3'-hydroxyl group of dephosphocoenzyme A to form coenzyme A. The sequence is that of Dephospho-CoA kinase from Shigella boydii serotype 4 (strain Sb227).